Here is a 360-residue protein sequence, read N- to C-terminus: Ferredoxin--NADP reductase, leaf isozyme, chloroplastic (360 aa).

Residues 1–52 (MAAAVTAAVSLPYSNSTSLPIRTSIVAPERLVFKKVSLNNVSISGRVGTIRA) constitute a chloroplast transit peptide. Residues 81-203 (KEPYVGRCLL…TGPVGKEMLM (123 aa)) enclose the FAD-binding FR-type domain. FAD is bound by residues 139-142 (RLYS), 160-162 (CVK), Tyr-166, 177-179 (VCS), and Thr-218. Ser-142 and Lys-162 together coordinate NADP(+). Residues Thr-218, 250 to 251 (VP), 280 to 281 (SR), Lys-290, 319 to 320 (GL), and Glu-358 contribute to the NADP(+) site.

It belongs to the ferredoxin--NADP reductase type 1 family. Monomer. Interacts with TIC62 (via C-terminus). FAD serves as cofactor.

It localises to the plastid. The protein resides in the chloroplast stroma. The protein localises to the chloroplast thylakoid membrane. The catalysed reaction is 2 reduced [2Fe-2S]-[ferredoxin] + NADP(+) + H(+) = 2 oxidized [2Fe-2S]-[ferredoxin] + NADPH. Its pathway is energy metabolism; photosynthesis. In terms of biological role, may play a key role in regulating the relative amounts of cyclic and non-cyclic electron flow to meet the demands of the plant for ATP and reducing power. This chain is Ferredoxin--NADP reductase, leaf isozyme, chloroplastic (PETH), found in Pisum sativum (Garden pea).